Reading from the N-terminus, the 86-residue chain is Small ribosomal subunit protein bS16 (86 aa).

Belongs to the bacterial ribosomal protein bS16 family.

The sequence is that of Small ribosomal subunit protein bS16 from Thermoanaerobacter sp. (strain X514).